Here is a 503-residue protein sequence, read N- to C-terminus: GMP synthase [glutamine-hydrolyzing] (503 aa).

The 187-residue stretch at 3-189 (PVLVVDFGSQ…AFLSSFAAPN (187 aa)) folds into the Glutamine amidotransferase type-1 domain. Cys-80 (nucleophile) is an active-site residue. Catalysis depends on residues His-165 and Glu-167. Residues 190-380 (WDPEQTICGT…LGIPKHIVHR (191 aa)) form the GMPS ATP-PPase domain. Position 217-223 (217-223 (SGGVDSV)) interacts with ATP.

In terms of assembly, homodimer.

It catalyses the reaction XMP + L-glutamine + ATP + H2O = GMP + L-glutamate + AMP + diphosphate + 2 H(+). It functions in the pathway purine metabolism; GMP biosynthesis; GMP from XMP (L-Gln route): step 1/1. Its function is as follows. Catalyzes the synthesis of GMP from XMP. The protein is GMP synthase [glutamine-hydrolyzing] of Tropheryma whipplei (strain TW08/27) (Whipple's bacillus).